The primary structure comprises 784 residues: Endonuclease MutS2 (784 aa).

ATP is bound at residue 335–342 (GPNTGGKT). Residues 527-546 (ERSKKQAEEDEARAHSAREE) are disordered. Residues 709-784 (LDLRGERYED…GTGVTVVELK (76 aa)) enclose the Smr domain.

It belongs to the DNA mismatch repair MutS family. MutS2 subfamily. Homodimer. Binds to stalled ribosomes, contacting rRNA.

In terms of biological role, endonuclease that is involved in the suppression of homologous recombination and thus may have a key role in the control of bacterial genetic diversity. Functionally, acts as a ribosome collision sensor, splitting the ribosome into its 2 subunits. Detects stalled/collided 70S ribosomes which it binds and splits by an ATP-hydrolysis driven conformational change. Acts upstream of the ribosome quality control system (RQC), a ribosome-associated complex that mediates the extraction of incompletely synthesized nascent chains from stalled ribosomes and their subsequent degradation. Probably generates substrates for RQC. The sequence is that of Endonuclease MutS2 from Geobacillus thermodenitrificans (strain NG80-2).